Reading from the N-terminus, the 200-residue chain is Putative 3-methyladenine DNA glycosylase (200 aa).

Belongs to the DNA glycosylase MPG family.

The polypeptide is Putative 3-methyladenine DNA glycosylase (Shouchella clausii (strain KSM-K16) (Alkalihalobacillus clausii)).